Here is a 105-residue protein sequence, read N- to C-terminus: MRKTKRRPVSVGEMLKVEFLEPMGITSKALAEAMGVHRNTVSNLINGGVLTAPVAIKLAAALGNTPEFWLNIQHAVDLWDTRNRYQEEAKFVKPLFVSLEQSART.

The region spanning 15–69 is the HTH cro/C1-type domain; sequence LKVEFLEPMGITSKALAEAMGVHRNTVSNLINGGVLTAPVAIKLAAALGNTPEFW. The H-T-H motif DNA-binding region spans 27–46; sequence SKALAEAMGVHRNTVSNLIN.

Antitoxin component of a type II toxin-antitoxin (TA) system that counteracts the effect of the HigB-1 toxin. Binds to its own promoter and regulates transcription of the higB-1/higA-1 operon. This Vibrio cholerae serotype O1 (strain ATCC 39315 / El Tor Inaba N16961) protein is Antitoxin HigA-1 (higA-1).